A 471-amino-acid polypeptide reads, in one-letter code: MVKFHLLVLIAFTCYTCSDATLWNPYKKLMRGSASPRRPGESGEPLFLTPLLQDGKIEEARNKARVNHPMLSSVESYSGFMTVDAKHNSNLFFWYVPAKNNREQAPILVWLQGGPGASSLFGMFEENGPFHIHRNKSVKQREYSWHQNHHMIYIDNPVGTGFSFTDSDEGYSTNEEHVGENLMKFIQQFFVLFPNLLKHPFYISGESYGGKFVPAFGYAIHNSQSQPKINLQGLAIGDGYTDPLNQLNYGEYLYELGLIDLNGRKKFDEDTAAAIACAERKDMKCANRLIQGLFDGLDGQESYFKKVTGFSSYYNFIKGDEESKQDSVLMEFLSNPEVRKGIHVGELPFHDSDGHNKVAEMLSEDTLDTVAPWVSKLLSHYRVLFYNGQLDIICAYPMTVDFLMKMPFDGDSEYKRANREIYRVDGEIAGYKKRAGRLQEVLIRNAGHMVPRDQPKWAFDMITSFTHKNYL.

Residues 1–19 form the signal peptide; that stretch reads MVKFHLLVLIAFTCYTCSD. N-linked (GlcNAc...) asparagine glycosylation is present at Asn-135. Active-site residues include Ser-207, Asp-391, and His-448.

This sequence belongs to the peptidase S10 family. As to expression, synthesized in the fat body of vitellogenic females, secreted into the hemolymph and accumulates in yolk bodies of developing oocytes.

It is found in the secreted. Functionally, may play a role in activating hydrolytic enzymes that are involved in the degradation of yolk proteins in developing embryos or may function as an exopeptidase in the degradation of vitellogenin. The sequence is that of Vitellogenic carboxypeptidase (VCP) from Aedes aegypti (Yellowfever mosquito).